A 294-amino-acid polypeptide reads, in one-letter code: 4-hydroxy-tetrahydrodipicolinate synthase (294 aa).

Thr44 serves as a coordination point for pyruvate. Tyr132 acts as the Proton donor/acceptor in catalysis. Lys161 (schiff-base intermediate with substrate) is an active-site residue. Position 203 (Ile203) interacts with pyruvate.

The protein belongs to the DapA family. As to quaternary structure, homotetramer; dimer of dimers.

The protein localises to the cytoplasm. The enzyme catalyses L-aspartate 4-semialdehyde + pyruvate = (2S,4S)-4-hydroxy-2,3,4,5-tetrahydrodipicolinate + H2O + H(+). It functions in the pathway amino-acid biosynthesis; L-lysine biosynthesis via DAP pathway; (S)-tetrahydrodipicolinate from L-aspartate: step 3/4. Functionally, catalyzes the condensation of (S)-aspartate-beta-semialdehyde [(S)-ASA] and pyruvate to 4-hydroxy-tetrahydrodipicolinate (HTPA). This Aquifex aeolicus (strain VF5) protein is 4-hydroxy-tetrahydrodipicolinate synthase.